The primary structure comprises 356 residues: Putative zinc finger protein At1g68190 (356 aa).

Zn(2+) contacts are provided by Cys14, Cys17, Cys37, His42, Cys57, Cys60, Cys80, and His85. Residues 14–56 form a B box-type 1; atypical zinc finger; that stretch reads CEFCKAYRAVVYCIADTANLCLTCDAKVHSANSLSGRHLRTVL. A B box-type 2; atypical zinc finger spans residues 57-97; the sequence is CDSCKNQPCVVRCFDHKMFLCHGCNDKFHGGGSSEHRRRDL. Residues 159–178 form a disordered region; the sequence is ENGSSSLTERGDPSPLELPK.

The protein belongs to the CONSTANS family.

Its subcellular location is the nucleus. The polypeptide is Putative zinc finger protein At1g68190 (Arabidopsis thaliana (Mouse-ear cress)).